A 314-amino-acid polypeptide reads, in one-letter code: PDZ domain-containing protein GIPC2 (314 aa).

The span at 1–12 shows a compositional bias: basic residues; it reads MPLGLRGKKKAA. The segment at 1–36 is disordered; sequence MPLGLRGKKKAAKSKEAARLVEGERSSGSQGVPGPP. Residues 13–25 show a composition bias toward basic and acidic residues; the sequence is KSKEAARLVEGER. Residues 117–197 enclose the PDZ domain; sequence EVNVYKSEDS…EELFTLQLIE (81 aa).

The protein belongs to the GIPC family. As to quaternary structure, probably interacts with SEMA5A. Expressed in kidney and lung (at protein level).

The protein resides in the cytoplasm. The polypeptide is PDZ domain-containing protein GIPC2 (Gipc2) (Mus musculus (Mouse)).